We begin with the raw amino-acid sequence, 923 residues long: Calmodulin-binding transcription activator 5 (923 aa).

The segment at residues 25-151 (IQTMLDEAYS…YRETHEVHAA (127 aa)) is a DNA-binding region (CG-1). Residues 272 to 372 (VYQNNNSCGA…HSHSDIPEQV (101 aa)) form a transcription activation region. The ANK repeat unit spans residues 611 to 640 (QGWTALHWAAYYGREKMVAALLSAGARPNL). IQ domains are found at residues 757-786 (NIIAAMKIQHAFRNFEVRRKIAAAARIQYR), 799-828 (MRKKAIRIQAAFRGFQVRRQYQKITWSVGV), and 875-904 (LERSVVKVQAMFRSKKAQQDYRRMKLAHEE). The tract at residues 824–846 (WSVGVLEKAILRWRLKRKGFRGL) is calmodulin-binding. A coiled-coil region spans residues 887-914 (RSKKAQQDYRRMKLAHEEAQLEYDGMQE).

Belongs to the CAMTA family. As to expression, expressed in roots, stems, leaves, pollen, top of sepals and siliques.

It is found in the nucleus. Transcription activator. Binds to the DNA consensus sequence 5'-[ACG]CGCG[GTC]-3'. Regulates transcriptional activity in response to calcium signals. Binds calmodulin in a calcium-dependent manner. Involved in response to cold. Contributes together with CAMTA3 to the positive regulation of the cold-induced expression of DREB1A/CBF3, DREB1B/CBF1 and DREB1C/CBF2. The chain is Calmodulin-binding transcription activator 5 from Arabidopsis thaliana (Mouse-ear cress).